Consider the following 243-residue polypeptide: UPF0758 protein MAE_44350 (243 aa).

The 123-residue stretch at 113 to 235 (VIDSPDTAAA…FQSLRQITDL (123 aa)) folds into the MPN domain. The Zn(2+) site is built by H184, H186, and D197. Residues 184-197 (HNHPTGSLVPSQDD) carry the JAMM motif motif.

The protein belongs to the UPF0758 family.

The protein is UPF0758 protein MAE_44350 of Microcystis aeruginosa (strain NIES-843 / IAM M-2473).